The primary structure comprises 1132 residues: BTB/POZ domain-containing protein 7 (1132 aa).

Polar residues predominate over residues 1-10 (MGANASNYPH). The interval 1–24 (MGANASNYPHSCSPRVGGNSQAQQ) is disordered. Glycine 2 carries N-myristoyl glycine lipidation. 2 BTB domains span residues 142 to 211 (TDVD…GMED) and 247 to 341 (YDVV…DLSV). A BACK domain is found at 413 to 479 (YGSKWVHRQA…WGEHQLMKRI (67 aa)). Residue serine 722 is modified to Phosphoserine. 2 disordered regions span residues 897–1019 (LSQS…HLHR) and 1035–1132 (QRSD…KSAL). The span at 918–927 (RHTHTSRKKH) shows a compositional bias: basic residues. 4 stretches are compositionally biased toward basic and acidic residues: residues 928 to 939 (TLEQKTDTRENP), 1000 to 1019 (KKQE…HLHR), 1083 to 1093 (PEERSGRRLAD), and 1105 to 1114 (TDLEREDSIS). Serine 1012 is subject to Phosphoserine.

The protein localises to the nucleus. Acts as a mediator of epithelial dynamics and organ branching by promoting cleft progression. Induced following accumulation of fibronectin in forming clefts, leading to local expression of the cell-scattering SNAIL2 and suppression of E-cadherin levels, thereby altering cell morphology and reducing cell-cell adhesion. This stimulates cell separation at the base of forming clefts by local, dynamic intercellular gap formation and promotes cleft progression. The polypeptide is BTB/POZ domain-containing protein 7 (BTBD7) (Homo sapiens (Human)).